A 78-amino-acid chain; its full sequence is Large ribosomal subunit protein bL28 (78 aa).

Positions 1 to 23 (MSRICQITGKKPLSGNKRSHSMN) are disordered.

This sequence belongs to the bacterial ribosomal protein bL28 family.

The polypeptide is Large ribosomal subunit protein bL28 (Wigglesworthia glossinidia brevipalpis).